We begin with the raw amino-acid sequence, 363 residues long: UDP-N-acetylglucosamine--N-acetylmuramyl-(pentapeptide) pyrophosphoryl-undecaprenol N-acetylglucosamine transferase (363 aa).

UDP-N-acetyl-alpha-D-glucosamine contacts are provided by residues T14–G16, R171, S200, and Q290.

This sequence belongs to the glycosyltransferase 28 family. MurG subfamily.

It localises to the cell inner membrane. It carries out the reaction di-trans,octa-cis-undecaprenyl diphospho-N-acetyl-alpha-D-muramoyl-L-alanyl-D-glutamyl-meso-2,6-diaminopimeloyl-D-alanyl-D-alanine + UDP-N-acetyl-alpha-D-glucosamine = di-trans,octa-cis-undecaprenyl diphospho-[N-acetyl-alpha-D-glucosaminyl-(1-&gt;4)]-N-acetyl-alpha-D-muramoyl-L-alanyl-D-glutamyl-meso-2,6-diaminopimeloyl-D-alanyl-D-alanine + UDP + H(+). It participates in cell wall biogenesis; peptidoglycan biosynthesis. Functionally, cell wall formation. Catalyzes the transfer of a GlcNAc subunit on undecaprenyl-pyrophosphoryl-MurNAc-pentapeptide (lipid intermediate I) to form undecaprenyl-pyrophosphoryl-MurNAc-(pentapeptide)GlcNAc (lipid intermediate II). In Borrelia garinii subsp. bavariensis (strain ATCC BAA-2496 / DSM 23469 / PBi) (Borreliella bavariensis), this protein is UDP-N-acetylglucosamine--N-acetylmuramyl-(pentapeptide) pyrophosphoryl-undecaprenol N-acetylglucosamine transferase.